Consider the following 346-residue polypeptide: SUMO-activating enzyme subunit 1 (346 aa).

Position 1 is an N-acetylmethionine (Met-1). The residue at position 2 (Val-2) is an N-acetylvaline; in SUMO-activating enzyme subunit 1, N-terminally processed. Position 12 is a phosphoserine (Ser-12). Lys-198 is modified (N6-acetyllysine).

This sequence belongs to the ubiquitin-activating E1 family. Heterodimer of SAE1 and UBA2/SAE2. The heterodimer corresponds to the two domains that are encoded on a single polypeptide chain in ubiquitin-activating enzyme E1. Interacts with UBE2I.

The protein localises to the nucleus. Its pathway is protein modification; protein sumoylation. In terms of biological role, the heterodimer acts as an E1 ligase for SUMO1, SUMO2, SUMO3, and probably SUMO4. It mediates ATP-dependent activation of SUMO proteins followed by formation of a thioester bond between a SUMO protein and a conserved active site cysteine residue on UBA2/SAE2. This is SUMO-activating enzyme subunit 1 (SAE1) from Bos taurus (Bovine).